Reading from the N-terminus, the 199-residue chain is OPA3-like protein (199 aa).

A coiled-coil region spans residues 98-141 (RSSEKDKKKEEALQNRFKNLEEKLEVQQETINNLTNVIEAIQSS).

It belongs to the OPA3 family.

This Dictyostelium discoideum (Social amoeba) protein is OPA3-like protein.